The primary structure comprises 83 residues: Cytochrome b559 subunit alpha (83 aa).

The helical transmembrane segment at 21–35 (VIHSITIPSLFIAGW) threads the bilayer. Histidine 23 is a binding site for heme.

The protein belongs to the PsbE/PsbF family. As to quaternary structure, heterodimer of an alpha subunit and a beta subunit. PSII is composed of 1 copy each of membrane proteins PsbA, PsbB, PsbC, PsbD, PsbE, PsbF, PsbH, PsbI, PsbJ, PsbK, PsbL, PsbM, PsbT, PsbX, PsbY, PsbZ, Psb30/Ycf12, at least 3 peripheral proteins of the oxygen-evolving complex and a large number of cofactors. It forms dimeric complexes. Requires heme b as cofactor.

It is found in the plastid. The protein localises to the chloroplast thylakoid membrane. Its function is as follows. This b-type cytochrome is tightly associated with the reaction center of photosystem II (PSII). PSII is a light-driven water:plastoquinone oxidoreductase that uses light energy to abstract electrons from H(2)O, generating O(2) and a proton gradient subsequently used for ATP formation. It consists of a core antenna complex that captures photons, and an electron transfer chain that converts photonic excitation into a charge separation. The sequence is that of Cytochrome b559 subunit alpha from Agrostis stolonifera (Creeping bentgrass).